We begin with the raw amino-acid sequence, 690 residues long: Elongation factor G (690 aa).

In terms of domain architecture, tr-type G spans 8–283 (EDYRNFGIMA…AVVAYLPSPL (276 aa)). Residues 17–24 (AHIDAGKT), 81–85 (DTPGH), and 135–138 (NKMD) each bind GTP.

It belongs to the TRAFAC class translation factor GTPase superfamily. Classic translation factor GTPase family. EF-G/EF-2 subfamily.

Its subcellular location is the cytoplasm. Its function is as follows. Catalyzes the GTP-dependent ribosomal translocation step during translation elongation. During this step, the ribosome changes from the pre-translocational (PRE) to the post-translocational (POST) state as the newly formed A-site-bound peptidyl-tRNA and P-site-bound deacylated tRNA move to the P and E sites, respectively. Catalyzes the coordinated movement of the two tRNA molecules, the mRNA and conformational changes in the ribosome. The protein is Elongation factor G of Nitrobacter winogradskyi (strain ATCC 25391 / DSM 10237 / CIP 104748 / NCIMB 11846 / Nb-255).